The primary structure comprises 533 residues: Protein disulfide isomerase-like 1-5 (533 aa).

An N-terminal signal peptide occupies residues 1–22 (MRARRVVAAAAVLLLFAVVAVA). 2 consecutive Thioredoxin domains span residues 51 to 196 (LGGG…KDQT) and 387 to 516 (LLEG…EKLQ). The Nucleophile role is filled by C97. A glycan (N-linked (GlcNAc...) asparagine) is linked at N151. Catalysis depends on nucleophile residues C436 and C439. A disulfide bridge connects residues C436 and C439. The short motif at 530–533 (KDEL) is the Prevents secretion from ER element.

It belongs to the protein disulfide isomerase family.

The protein resides in the endoplasmic reticulum lumen. It carries out the reaction Catalyzes the rearrangement of -S-S- bonds in proteins.. Its function is as follows. Acts as a protein-folding catalyst that interacts with nascent polypeptides to catalyze the formation, isomerization, and reduction or oxidation of disulfide bonds. May play a role in storage protein biogenesis. In Oryza sativa subsp. japonica (Rice), this protein is Protein disulfide isomerase-like 1-5 (PDIL1-5).